We begin with the raw amino-acid sequence, 430 residues long: tRNA(Ile)-lysidine synthase (430 aa).

21–26 contributes to the ATP binding site; sequence SGGLDS.

This sequence belongs to the tRNA(Ile)-lysidine synthase family.

Its subcellular location is the cytoplasm. The catalysed reaction is cytidine(34) in tRNA(Ile2) + L-lysine + ATP = lysidine(34) in tRNA(Ile2) + AMP + diphosphate + H(+). Its function is as follows. Ligates lysine onto the cytidine present at position 34 of the AUA codon-specific tRNA(Ile) that contains the anticodon CAU, in an ATP-dependent manner. Cytidine is converted to lysidine, thus changing the amino acid specificity of the tRNA from methionine to isoleucine. This Salmonella dublin (strain CT_02021853) protein is tRNA(Ile)-lysidine synthase.